Here is a 229-residue protein sequence, read N- to C-terminus: Leucyl/phenylalanyl-tRNA--protein transferase (229 aa).

Belongs to the L/F-transferase family.

It is found in the cytoplasm. It catalyses the reaction N-terminal L-lysyl-[protein] + L-leucyl-tRNA(Leu) = N-terminal L-leucyl-L-lysyl-[protein] + tRNA(Leu) + H(+). The catalysed reaction is N-terminal L-arginyl-[protein] + L-leucyl-tRNA(Leu) = N-terminal L-leucyl-L-arginyl-[protein] + tRNA(Leu) + H(+). It carries out the reaction L-phenylalanyl-tRNA(Phe) + an N-terminal L-alpha-aminoacyl-[protein] = an N-terminal L-phenylalanyl-L-alpha-aminoacyl-[protein] + tRNA(Phe). Functions in the N-end rule pathway of protein degradation where it conjugates Leu, Phe and, less efficiently, Met from aminoacyl-tRNAs to the N-termini of proteins containing an N-terminal arginine or lysine. The protein is Leucyl/phenylalanyl-tRNA--protein transferase of Pseudomonas syringae pv. syringae (strain B728a).